A 627-amino-acid polypeptide reads, in one-letter code: Pentatricopeptide repeat-containing protein At2g15630, mitochondrial (627 aa).

The N-terminal 29 residues, 1–29 (MRRFTVPCILRHRISILSGAGYSPAAARL), are a transit peptide targeting the mitochondrion. PPR repeat units lie at residues 154–188 (STIL…GFYP), 189–223 (KTET…EIKS), 224–258 (NVYT…GIKP), 259–293 (TIVT…GFQP), 294–324 (DMQT…IGLV), 326–360 (DSVS…GMVP), 361–395 (TFYT…GIVL), 396–430 (DSVT…GIQP), 431–465 (TQFT…GMKP), 466–500 (DLVM…SINP), 501–535 (DDVT…GIKP), 536–570 (DHIS…GFNP), and 571–605 (TLLT…GIVP).

Belongs to the PPR family. P subfamily.

Its subcellular location is the mitochondrion. The chain is Pentatricopeptide repeat-containing protein At2g15630, mitochondrial from Arabidopsis thaliana (Mouse-ear cress).